We begin with the raw amino-acid sequence, 536 residues long: Probable cytochrome P450 520A1 (536 aa).

The chain crosses the membrane as a helical span at residues 1 to 21; that stretch reads MEILTFIIYLITFFILFDFYK. A heme-binding site is contributed by C479.

The protein belongs to the cytochrome P450 family. Requires heme as cofactor.

Its subcellular location is the membrane. The protein is Probable cytochrome P450 520A1 (cyp520A1) of Dictyostelium discoideum (Social amoeba).